The primary structure comprises 139 residues: Ribulose bisphosphate carboxylase small subunit (139 aa).

It belongs to the RuBisCO small chain family. Heterohexadecamer of 8 large and 8 small subunits.

It is found in the plastid. The protein resides in the chloroplast. In terms of biological role, ruBisCO catalyzes two reactions: the carboxylation of D-ribulose 1,5-bisphosphate, the primary event in carbon dioxide fixation, as well as the oxidative fragmentation of the pentose substrate in the photorespiration process. Both reactions occur simultaneously and in competition at the same active site. Although the small subunit is not catalytic it is essential for maximal activity. The protein is Ribulose bisphosphate carboxylase small subunit of Ectocarpus siliculosus (Brown alga).